The primary structure comprises 626 residues: Chaperone protein HtpG (626 aa).

Positions 1–329 are a; substrate-binding; that stretch reads MSEETLSFQA…SSDLPLNVSR (329 aa). Residues 330–549 are b; it reads EMLQDDPRLR…EGAMSLHLQK (220 aa). The segment at 550–626 is c; it reads LLRQANQGSE…LTEVMGKGLI (77 aa).

It belongs to the heat shock protein 90 family. As to quaternary structure, homodimer.

It localises to the cytoplasm. Molecular chaperone. Has ATPase activity. The sequence is that of Chaperone protein HtpG from Rhodospirillum rubrum (strain ATCC 11170 / ATH 1.1.1 / DSM 467 / LMG 4362 / NCIMB 8255 / S1).